Here is a 513-residue protein sequence, read N- to C-terminus: Putative ADP-ribosyl glycohydrolase L444 (513 aa).

Residues 1 to 23 (MSDKIQSRESKTTKPTKTEKISD) are compositionally biased toward basic and acidic residues. The interval 1–33 (MSDKIQSRESKTTKPTKTEKISDKSGNLSQVKS) is disordered. A compositionally biased stretch (polar residues) spans 24–33 (KSGNLSQVKS).

It belongs to the ADP-ribosylglycohydrolase family.

This Acanthamoeba polyphaga mimivirus (APMV) protein is Putative ADP-ribosyl glycohydrolase L444.